The chain runs to 125 residues: Small ribosomal subunit protein uS17 (125 aa).

2 disordered regions span residues 1-21 (MSSS…VSSR) and 101-125 (VAAQ…APQA).

The protein belongs to the universal ribosomal protein uS17 family. Part of the 30S ribosomal subunit.

One of the primary rRNA binding proteins, it binds specifically to the 5'-end of 16S ribosomal RNA. The chain is Small ribosomal subunit protein uS17 from Opitutus terrae (strain DSM 11246 / JCM 15787 / PB90-1).